Consider the following 359-residue polypeptide: Bergaptol O-methyltransferase (359 aa).

His-126 contacts bergaptol. S-adenosyl-L-homocysteine is bound by residues Ser-179, Gly-203, Asp-226, Asp-246, and Lys-260. His-264 lines the bergaptol pocket. The Proton acceptor role is filled by His-264.

The protein belongs to the class I-like SAM-binding methyltransferase superfamily. Cation-independent O-methyltransferase family. COMT subfamily. Homodimer. In terms of tissue distribution, mostly expressed in roots and, to a lower extent, in stems and leaves.

It localises to the cytoplasm. The catalysed reaction is bergaptol + S-adenosyl-L-methionine = bergapten + S-adenosyl-L-homocysteine. Its pathway is aromatic compound metabolism. It participates in secondary metabolite biosynthesis. Functionally, O-methyltransferase involved in the biosynthesis of furocoumarins natural products such as bergapten, a photosensitizer used for medical purpose such as treating psoriasis and vitiligo or facilitating resistance to microbial infection and other stresses. Catalyzes specifically the methylation of bergaptol. Not active on xanthotol, isoscopoletin, scopoletin and esculetin. This chain is Bergaptol O-methyltransferase, found in Kitagawia praeruptora (Peucedanum praeruptorum).